A 387-amino-acid polypeptide reads, in one-letter code: Cystathionine beta-lyase (387 aa).

Lysine 204 carries the N6-(pyridoxal phosphate)lysine modification.

It belongs to the trans-sulfuration enzymes family. In terms of assembly, homotetramer. Requires pyridoxal 5'-phosphate as cofactor.

Its subcellular location is the cytoplasm. The enzyme catalyses L,L-cystathionine + H2O = L-homocysteine + pyruvate + NH4(+). The catalysed reaction is an S-substituted L-cysteine + H2O = a thiol + pyruvate + NH4(+). It functions in the pathway amino-acid biosynthesis; L-methionine biosynthesis via de novo pathway; L-homocysteine from L-cystathionine: step 1/1. In terms of biological role, catalyzes the cleavage of cystathionine to homocysteine, pyruvate and ammonia during methionine biosynthesis. This is Cystathionine beta-lyase (metC) from Coxiella burnetii (strain RSA 493 / Nine Mile phase I).